Consider the following 237-residue polypeptide: RNA polymerase sigma-28 factor (237 aa).

The propeptide occupies 1–19 (MSLFAAIGYMVREVFVFVS). Positions 77-90 (DLISIGTIGLIKAI) match the Polymerase core binding motif. The H-T-H motif DNA-binding region spans 197–206 (QREIAKALGI).

Belongs to the sigma-70 factor family. Proteolytically cleaved in the N-terminus probably by a SpoIIGA homolog to yield the active peptide.

Functionally, sigma factors are initiation factors that promote the attachment of RNA polymerase to specific initiation sites and are then released. This sigma factor directs the transcription of crystal protein genes, a sporulation-regulated event. In Bacillus thuringiensis subsp. kurstaki, this protein is RNA polymerase sigma-28 factor (sigK).